Here is a 143-residue protein sequence, read N- to C-terminus: Fluoride-specific ion channel FluC 1 (143 aa).

4 helical membrane-spanning segments follow: residues 13 to 33, 42 to 62, 80 to 100, and 111 to 131; these read VLVG…SVIA, GVPW…ATLL, LCIG…TVEA, and WGIA…WVVI. Na(+)-binding residues include Gly88 and Thr91.

It belongs to the fluoride channel Fluc/FEX (TC 1.A.43) family.

Its subcellular location is the cell membrane. It carries out the reaction fluoride(in) = fluoride(out). With respect to regulation, na(+) is not transported, but it plays an essential structural role and its presence is essential for fluoride channel function. Its function is as follows. Fluoride-specific ion channel. Important for reducing fluoride concentration in the cell, thus reducing its toxicity. The polypeptide is Fluoride-specific ion channel FluC 1 (Cutibacterium acnes (strain DSM 16379 / KPA171202) (Propionibacterium acnes)).